The primary structure comprises 180 residues: NAD(P)H-quinone oxidoreductase subunit I, chloroplastic (180 aa).

2 consecutive 4Fe-4S ferredoxin-type domains span residues 55–84 and 95–124; these read GRIH…VDWK and LNYS…MTEE. The [4Fe-4S] cluster site is built by C64, C67, C70, C74, C104, C107, C110, and C114.

This sequence belongs to the complex I 23 kDa subunit family. In terms of assembly, NDH is composed of at least 16 different subunits, 5 of which are encoded in the nucleus. It depends on [4Fe-4S] cluster as a cofactor.

The protein localises to the plastid. It localises to the chloroplast thylakoid membrane. It carries out the reaction a plastoquinone + NADH + (n+1) H(+)(in) = a plastoquinol + NAD(+) + n H(+)(out). The catalysed reaction is a plastoquinone + NADPH + (n+1) H(+)(in) = a plastoquinol + NADP(+) + n H(+)(out). In terms of biological role, NDH shuttles electrons from NAD(P)H:plastoquinone, via FMN and iron-sulfur (Fe-S) centers, to quinones in the photosynthetic chain and possibly in a chloroplast respiratory chain. The immediate electron acceptor for the enzyme in this species is believed to be plastoquinone. Couples the redox reaction to proton translocation, and thus conserves the redox energy in a proton gradient. This Ranunculus macranthus (Large buttercup) protein is NAD(P)H-quinone oxidoreductase subunit I, chloroplastic.